A 489-amino-acid polypeptide reads, in one-letter code: GTPase Der (489 aa).

2 consecutive EngA-type G domains span residues 3 to 166 (PVIA…PKDE) and 195 to 368 (IKIA…KSAV). Residues 9–16 (GRPNVGKS), 56–60 (DTGGI), 118–121 (NKID), 201–208 (GRPNVGKS), 248–252 (DTAGV), and 313–316 (NKWD) contribute to the GTP site. Residues 369-453 (TRWPTSRLTQ…PIRIEFKGGE (85 aa)) form the KH-like domain. A disordered region spans residues 451–489 (GGENPYEGNKNTLTDRQVNKKRRMMSHHKKADKKRRDKR). Basic residues predominate over residues 469 to 489 (NKKRRMMSHHKKADKKRRDKR).

It belongs to the TRAFAC class TrmE-Era-EngA-EngB-Septin-like GTPase superfamily. EngA (Der) GTPase family. In terms of assembly, associates with the 50S ribosomal subunit.

Its function is as follows. GTPase that plays an essential role in the late steps of ribosome biogenesis. In Pseudomonas syringae pv. tomato (strain ATCC BAA-871 / DC3000), this protein is GTPase Der.